The chain runs to 371 residues: tRNA-specific 2-thiouridylase MnmA (371 aa).

Residues 12-19 and Met38 each bind ATP; that span reads GMSGGVDS. An interaction with target base in tRNA region spans residues 98 to 100; sequence NPD. Cys103 serves as the catalytic Nucleophile. Cysteines 103 and 200 form a disulfide. Residue Gly128 coordinates ATP. Residues 150–152 are interaction with tRNA; it reads KDQ. The active-site Cysteine persulfide intermediate is Cys200. Residues 312–313 form an interaction with tRNA region; the sequence is RY.

It belongs to the MnmA/TRMU family. As to quaternary structure, interacts with TusE.

It localises to the cytoplasm. The catalysed reaction is S-sulfanyl-L-cysteinyl-[protein] + uridine(34) in tRNA + AH2 + ATP = 2-thiouridine(34) in tRNA + L-cysteinyl-[protein] + A + AMP + diphosphate + H(+). Functionally, catalyzes the 2-thiolation of uridine at the wobble position (U34) of tRNA(Lys), tRNA(Glu) and tRNA(Gln), leading to the formation of s(2)U34, the first step of tRNA-mnm(5)s(2)U34 synthesis. Sulfur is provided by IscS, via a sulfur-relay system. Binds ATP and its substrate tRNAs. This Yersinia pseudotuberculosis serotype O:1b (strain IP 31758) protein is tRNA-specific 2-thiouridylase MnmA.